We begin with the raw amino-acid sequence, 171 residues long: Shikimate kinase (171 aa).

An ATP-binding site is contributed by 14-19 (GAGKST). Residue S18 coordinates Mg(2+). 3 residues coordinate substrate: D36, R60, and G82. R120 provides a ligand contact to ATP. R139 contacts substrate. Q156 contacts ATP.

It belongs to the shikimate kinase family. Monomer. The cofactor is Mg(2+).

The protein resides in the cytoplasm. It carries out the reaction shikimate + ATP = 3-phosphoshikimate + ADP + H(+). Its pathway is metabolic intermediate biosynthesis; chorismate biosynthesis; chorismate from D-erythrose 4-phosphate and phosphoenolpyruvate: step 5/7. Functionally, catalyzes the specific phosphorylation of the 3-hydroxyl group of shikimic acid using ATP as a cosubstrate. The protein is Shikimate kinase of Shewanella baltica (strain OS195).